Reading from the N-terminus, the 1313-residue chain is Angiotensin-converting enzyme (1313 aa).

Residues 1–35 (MGAASGQRGRWPLSPPLLMLSLLLLLLLPPSPAPA) form the signal peptide. The Extracellular portion of the chain corresponds to 36 to 1265 (LDPGLQPGNF…LEPQQARVGQ (1230 aa)). Residues Asn-44, Asn-60, Asn-80, Asn-117, Asn-152, and Asn-166 are each glycosylated (N-linked (GlcNAc...) asparagine). 2 consecutive Peptidase M2 domains span residues 46-630 (SADE…LGWP) and 649-1228 (ETDE…LGWP). Residues Cys-163 and Cys-171 are joined by a disulfide bond. Tyr-237 contacts chloride. Asn-324 is a glycosylation site (N-linked (GlcNAc...) asparagine). A disulfide bridge connects residues Cys-365 and Cys-383. Position 396 (His-396) interacts with Zn(2+). The Proton acceptor 1 role is filled by Glu-397. Zn(2+) is bound by residues His-400 and Glu-424. An N-linked (GlcNAc...) asparagine glycan is attached at Asn-515. The active-site Proton donor 1 is the His-526. Arg-535 is a chloride binding site. A disulfide bridge links Cys-551 with Cys-563. N-linked (GlcNAc...) asparagine glycosylation is found at Asn-683, Asn-701, Asn-720, and Asn-766. A disulfide bridge links Cys-763 with Cys-769. 2 residues coordinate chloride: Arg-797 and Tyr-835. Asn-948 carries N-linked (GlcNAc...) asparagine glycosylation. Cys-963 and Cys-981 are joined by a disulfide. His-994 contacts Zn(2+). Glu-995 (proton acceptor 2) is an active-site residue. Zn(2+)-binding residues include His-998 and Glu-1022. The chloride site is built by Trp-1096 and Arg-1100. Residue His-1124 is the Proton donor 2 of the active site. Arg-1133 contributes to the chloride binding site. A disulfide bridge links Cys-1149 with Cys-1161. Asn-1197 carries an N-linked (GlcNAc...) asparagine glycan. A juxtamembrane stalk region spans residues 1221–1262 (HGETLGWPEYTWTPNTARAEGSLPESSRVNFLGMYLEPQQAR). The chain crosses the membrane as a helical span at residues 1266–1282 (WVLLFLGVALLVATVGL). Over 1283-1313 (AHRLYNIHNHHSLRRPHRGPQFGSEVELRHS) the chain is Cytoplasmic. A Phosphoserine modification is found at Ser-1306.

It belongs to the peptidase M2 family. Monomer and homodimer; homodimerizes following binding to an inhibitor. Interacts with calmodulin (CALM1, CALM2 or CALM3); interaction takes place in the cytoplasmic region and regulates phosphorylation and proteolytic cleavage. The cofactor is Zn(2+). Chloride serves as cofactor. Produced following proteolytic cleavage by secretase enzymes that cleave the transmembrane form in the juxtamembrane stalk region upstream of the transmembrane region. Cleavage can take place at different sites of the juxtamembrane stalk region. In terms of processing, phosphorylated by CK2 on Ser-1306; which allows membrane retention. Phosphorylated on tyrosine residues on its extracellular part, promoting cleavage by secretase enzymes and formation of the soluble form (Angiotensin-converting enzyme, soluble form). Expressed in brain, kidney, lung, skeletal muscle and heart. As to expression, testis-specific isoform is expressed in spermatocytes, adult testis.

Its subcellular location is the cell membrane. The protein localises to the cytoplasm. It is found in the secreted. It carries out the reaction Release of a C-terminal dipeptide, oligopeptide-|-Xaa-Yaa, when Xaa is not Pro, and Yaa is neither Asp nor Glu. Thus, conversion of angiotensin I to angiotensin II, with increase in vasoconstrictor activity, but no action on angiotensin II.. It catalyses the reaction angiotensin I + H2O = L-histidyl-L-leucine + angiotensin II. The enzyme catalyses bradykinin + H2O = L-Phe-L-Arg + bradykinin(1-7). The catalysed reaction is substance P + H2O = substance P(1-9) + L-Leu-L-Met-NH2. It carries out the reaction substance P + H2O = substance P(1-8) + Gly-L-Leu-L-Met-NH2. It catalyses the reaction substance P + H2O = L-Phe-L-Phe-Gly-L-Leu-L-Met-NH2 + substance P(1-6). The enzyme catalyses neurotensin + H2O = neurotensin(1-11) + L-isoleucyl-L-leucine. The catalysed reaction is goralatide + H2O = N-acetyl-L-seryl-L-aspartate + L-lysyl-L-proline. It carries out the reaction Met-enkephalin + H2O = L-phenylalanyl-L-methionine + L-tyrosylglycylglycine. It catalyses the reaction Leu-enkephalin + H2O = L-tyrosylglycylglycine + L-phenylalanyl-L-leucine. The enzyme catalyses Met-enkephalin-Arg-Phe + H2O = L-arginyl-L-phenylalanine + Met-enkephalin. With respect to regulation, the dipeptidyl carboxypeptidase activity is strongly activated by chloride. The dipeptidyl carboxypeptidase activity is specifically inhibited by lisinopril, captopril and enalaprilat. Strongly inhibited by lisinopril and captopril. In terms of biological role, dipeptidyl carboxypeptidase that removes dipeptides from the C-terminus of a variety of circulating hormones, such as angiotensin I, bradykinin or enkephalins, thereby playing a key role in the regulation of blood pressure, electrolyte homeostasis or synaptic plasticity. Composed of two similar catalytic domains, each possessing a functional active site, with different selectivity for substrates. Plays a major role in the angiotensin-renin system that regulates blood pressure and sodium retention by the kidney by converting angiotensin I to angiotensin II, resulting in an increase of the vasoconstrictor activity of angiotensin. Also able to inactivate bradykinin, a potent vasodilator, and therefore enhance the blood pressure response. Acts as a regulator of synaptic transmission by mediating cleavage of neuropeptide hormones, such as substance P, neurotensin or enkephalins. Catalyzes degradation of different enkephalin neuropeptides (Met-enkephalin, Leu-enkephalin, Met-enkephalin-Arg-Phe and possibly Met-enkephalin-Arg-Gly-Leu). Acts as a regulator of synaptic plasticity in the nucleus accumbens of the brain by mediating cleavage of Met-enkephalin-Arg-Phe, a strong ligand of Mu-type opioid receptor OPRM1, into Met-enkephalin. Met-enkephalin-Arg-Phe cleavage by ACE decreases activation of OPRM1, leading to long-term synaptic potentiation of glutamate release. Also acts as a regulator of hematopoietic stem cell differentiation by mediating degradation of hemoregulatory peptide N-acetyl-SDKP (AcSDKP). Acts as a regulator of cannabinoid signaling pathway by mediating degradation of hemopressin, an antagonist peptide of the cannabinoid receptor CNR1. Involved in amyloid-beta metabolism by catalyzing degradation of Amyloid-beta protein 40 and Amyloid-beta protein 42 peptides, thereby preventing plaque formation. Catalyzes cleavage of cholecystokinin (maturation of Cholecystokinin-8 and Cholecystokinin-5) and Gonadoliberin-1 (both maturation and degradation) hormones. Degradation of hemoregulatory peptide N-acetyl-SDKP (AcSDKP) and amyloid-beta proteins is mediated by the N-terminal catalytic domain, while angiotensin I and cholecystokinin cleavage is mediated by the C-terminal catalytic region. Functionally, soluble form that is released in blood plasma and other body fluids following proteolytic cleavage in the juxtamembrane stalk region. Its function is as follows. Isoform produced by alternative promoter usage that is specifically expressed in spermatocytes and adult testis, and which is required for male fertility. In contrast to somatic isoforms, only contains one catalytic domain. Acts as a dipeptidyl carboxypeptidase that removes dipeptides from the C-terminus of substrates. The identity of substrates that are needed for male fertility is unknown. May also have a glycosidase activity which releases GPI-anchored proteins from the membrane by cleaving the mannose linkage in the GPI moiety. The GPIase activity was reported to be essential for the egg-binding ability of the sperm. This activity is however unclear and has been challenged by other groups, suggesting that it may be indirect. This chain is Angiotensin-converting enzyme, found in Rattus norvegicus (Rat).